We begin with the raw amino-acid sequence, 195 residues long: GTP cyclohydrolase 1 (195 aa).

Residues C85, H88, and C157 each coordinate Zn(2+).

The protein belongs to the GTP cyclohydrolase I family. Toroid-shaped homodecamer, composed of two pentamers of five dimers.

The enzyme catalyses GTP + H2O = 7,8-dihydroneopterin 3'-triphosphate + formate + H(+). It functions in the pathway cofactor biosynthesis; 7,8-dihydroneopterin triphosphate biosynthesis; 7,8-dihydroneopterin triphosphate from GTP: step 1/1. This chain is GTP cyclohydrolase 1, found in Clostridium acetobutylicum (strain ATCC 824 / DSM 792 / JCM 1419 / IAM 19013 / LMG 5710 / NBRC 13948 / NRRL B-527 / VKM B-1787 / 2291 / W).